Consider the following 172-residue polypeptide: 3-hydroxydecanoyl-[acyl-carrier-protein] dehydratase (172 aa).

His71 is an active-site residue.

The protein belongs to the thioester dehydratase family. FabA subfamily. In terms of assembly, homodimer.

Its subcellular location is the cytoplasm. It carries out the reaction a (3R)-hydroxyacyl-[ACP] = a (2E)-enoyl-[ACP] + H2O. The enzyme catalyses (3R)-hydroxydecanoyl-[ACP] = (2E)-decenoyl-[ACP] + H2O. It catalyses the reaction (2E)-decenoyl-[ACP] = (3Z)-decenoyl-[ACP]. It participates in lipid metabolism; fatty acid biosynthesis. In terms of biological role, necessary for the introduction of cis unsaturation into fatty acids. Catalyzes the dehydration of (3R)-3-hydroxydecanoyl-ACP to E-(2)-decenoyl-ACP and then its isomerization to Z-(3)-decenoyl-ACP. Can catalyze the dehydratase reaction for beta-hydroxyacyl-ACPs with saturated chain lengths up to 16:0, being most active on intermediate chain length. The polypeptide is 3-hydroxydecanoyl-[acyl-carrier-protein] dehydratase (Escherichia fergusonii (strain ATCC 35469 / DSM 13698 / CCUG 18766 / IAM 14443 / JCM 21226 / LMG 7866 / NBRC 102419 / NCTC 12128 / CDC 0568-73)).